Reading from the N-terminus, the 136-residue chain is uncharacterized protein (136 aa).

In terms of tissue distribution, widely expressed.

This is an uncharacterized protein from Homo sapiens (Human).